Reading from the N-terminus, the 213-residue chain is MKKGFFITIEGPDGAGKTSLLDNLMPALRDIFGDNLIETREPGGVRISEAIRKIVLGLKYPEMNRRTEALLFAAARAQHMVEKIEPALADGKIVLSDRFVDSSIAYQGGGRELGIEAVGEINNFATNGLQPNLTLLLDLPSEVGIARIMKHRSDEVNRLDKDRLVFHKKVRQTYLQLAKDQPNRIKVLDATQSPEKIAINALQLIQESLKGWI.

Position 11–18 (11–18 (GPDGAGKT)) interacts with ATP.

It belongs to the thymidylate kinase family.

It catalyses the reaction dTMP + ATP = dTDP + ADP. In terms of biological role, phosphorylation of dTMP to form dTDP in both de novo and salvage pathways of dTTP synthesis. This Oenococcus oeni (strain ATCC BAA-331 / PSU-1) protein is Thymidylate kinase.